The chain runs to 168 residues: DNA damage-inducible transcript 3 protein (168 aa).

The tract at residues 10–18 (FGALSSWEL) is interaction with TRIB3. The segment at 10–26 (FGALSSWELEAWYEDLQ) is N-terminal. Ser14, Ser15, Ser30, and Ser31 each carry phosphoserine; by CK2. The tract at residues 31 to 141 (SDENRGTCVS…QLAEENERLK (111 aa)) is disordered. Residues 76–90 (SQSPCSPESSQSSLA) show a composition bias toward low complexity. Phosphoserine; by MAPK14 occurs at positions 78 and 81. In terms of domain architecture, bZIP spans 98–161 (QGRTRKRKQS…EATRRALIDR (64 aa)). The basic motif stretch occupies residues 100 to 129 (RTRKRKQSGQSPARAGKQRMKEKEQENERK). Basic and acidic residues predominate over residues 118-141 (RMKEKEQENERKVAQLAEENERLK). Residues 133 to 147 (LAEENERLKQEIERL) are leucine-zipper.

Belongs to the bZIP family. Heterodimer. Interacts with TCF7L2/TCF4, EP300/P300, HDAC1, HDAC5 and HDAC6. Interacts with TRIB3 which blocks its association with EP300/P300. Interacts with FOXO3, CEBPB and ATF4. Ubiquitinated, leading to its degradation by the proteasome. Post-translationally, phosphorylation at serine residues by MAPK14 enhances its transcriptional activation activity while phosphorylation at serine residues by CK2 inhibits its transcriptional activation activity.

It localises to the cytoplasm. The protein localises to the nucleus. Its function is as follows. Multifunctional transcription factor in ER stress response. Plays an essential role in the response to a wide variety of cell stresses and induces cell cycle arrest and apoptosis in response to ER stress. Plays a dual role both as an inhibitor of CCAAT/enhancer-binding protein (C/EBP) function and as an activator of other genes. Acts as a dominant-negative regulator of C/EBP-induced transcription: dimerizes with members of the C/EBP family, impairs their association with C/EBP binding sites in the promoter regions, and inhibits the expression of C/EBP regulated genes. Positively regulates the transcription of TRIB3, IL6, IL8, IL23, TNFRSF10B/DR5, PPP1R15A/GADD34, BBC3/PUMA, BCL2L11/BIM and ERO1L. Negatively regulates; expression of BCL2 and MYOD1, ATF4-dependent transcriptional activation of asparagine synthetase (ASNS), CEBPA-dependent transcriptional activation of hepcidin (HAMP) and CEBPB-mediated expression of peroxisome proliferator-activated receptor gamma (PPARG). Inhibits the canonical Wnt signaling pathway by binding to TCF7L2/TCF4, impairing its DNA-binding properties and repressing its transcriptional activity. Plays a regulatory role in the inflammatory response through the induction of caspase-11 (CASP4/CASP11) which induces the activation of caspase-1 (CASP1) and both these caspases increase the activation of pro-IL1B to mature IL1B which is involved in the inflammatory response. This is DNA damage-inducible transcript 3 protein (DDIT3) from Bos taurus (Bovine).